A 616-amino-acid chain; its full sequence is Chaperone protein HscA homolog (616 aa).

This sequence belongs to the heat shock protein 70 family.

Chaperone involved in the maturation of iron-sulfur cluster-containing proteins. Has a low intrinsic ATPase activity which is markedly stimulated by HscB. The protein is Chaperone protein HscA homolog of Mannheimia succiniciproducens (strain KCTC 0769BP / MBEL55E).